The sequence spans 353 residues: Anthranilate phosphoribosyltransferase (353 aa).

5-phospho-alpha-D-ribose 1-diphosphate is bound by residues glycine 87, 90 to 91, threonine 95, 97 to 100, 115 to 123, and threonine 127; these read GD, NIST, and KHGNRAASS. Glycine 87 provides a ligand contact to anthranilate. Residue serine 99 participates in Mg(2+) binding. Asparagine 118 lines the anthranilate pocket. Arginine 173 is a binding site for anthranilate. Residues aspartate 231 and glutamate 232 each coordinate Mg(2+).

The protein belongs to the anthranilate phosphoribosyltransferase family. In terms of assembly, homodimer. The cofactor is Mg(2+).

It catalyses the reaction N-(5-phospho-beta-D-ribosyl)anthranilate + diphosphate = 5-phospho-alpha-D-ribose 1-diphosphate + anthranilate. Its pathway is amino-acid biosynthesis; L-tryptophan biosynthesis; L-tryptophan from chorismate: step 2/5. Catalyzes the transfer of the phosphoribosyl group of 5-phosphorylribose-1-pyrophosphate (PRPP) to anthranilate to yield N-(5'-phosphoribosyl)-anthranilate (PRA). The sequence is that of Anthranilate phosphoribosyltransferase from Salinispora arenicola (strain CNS-205).